Reading from the N-terminus, the 926-residue chain is Coatomer subunit beta'-2 (926 aa).

9 WD repeats span residues 13 to 52 (QRSE…MAKS), 55 to 94 (VTEL…KVKV), 97 to 136 (AHSD…ACTQ), 140 to 180 (GHSH…PNFT), 183 to 224 (AHQK…CVQT), 227 to 266 (GHTH…LENT), 269 to 309 (YGLE…ASMD), 351 to 390 (TCDL…RSFG), and 461 to 501 (RIDV…SHFD). A disordered region spans residues 847–926 (EEESLENGDM…GTNNEGNPSA (80 aa)). A compositionally biased stretch (basic and acidic residues) spans 868 to 887 (NEQRNEDDVAEHVEEHHEEK). Acidic residues predominate over residues 888–900 (EAEEEEGIVDGDS). Over residues 917–926 (GTNNEGNPSA) the composition is skewed to polar residues.

Belongs to the WD repeat COPB2 family. In terms of assembly, oligomeric complex that consists of at least the alpha, beta, beta', gamma, delta, epsilon and zeta subunits.

The protein resides in the cytoplasm. It localises to the golgi apparatus membrane. It is found in the cytoplasmic vesicle. The protein localises to the COPI-coated vesicle membrane. The coatomer is a cytosolic protein complex that binds to dilysine motifs and reversibly associates with Golgi non-clathrin-coated vesicles, which further mediate biosynthetic protein transport from the ER, via the Golgi up to the trans Golgi network. Coatomer complex is required for budding from Golgi membranes, and is essential for the retrograde Golgi-to-ER transport of dilysine-tagged proteins. This is Coatomer subunit beta'-2 from Arabidopsis thaliana (Mouse-ear cress).